Reading from the N-terminus, the 316-residue chain is tRNA dimethylallyltransferase (316 aa).

17-24 contributes to the ATP binding site; sequence GPTASGKT. 19–24 lines the substrate pocket; the sequence is TASGKT. Interaction with substrate tRNA stretches follow at residues 42–45, 166–170, 247–252, and 280–287; these read DSAL, QRLSR, RCVGYR, and KRQITWLR.

It belongs to the IPP transferase family. In terms of assembly, monomer. Requires Mg(2+) as cofactor.

The catalysed reaction is adenosine(37) in tRNA + dimethylallyl diphosphate = N(6)-dimethylallyladenosine(37) in tRNA + diphosphate. Its function is as follows. Catalyzes the transfer of a dimethylallyl group onto the adenine at position 37 in tRNAs that read codons beginning with uridine, leading to the formation of N6-(dimethylallyl)adenosine (i(6)A). In Escherichia fergusonii (strain ATCC 35469 / DSM 13698 / CCUG 18766 / IAM 14443 / JCM 21226 / LMG 7866 / NBRC 102419 / NCTC 12128 / CDC 0568-73), this protein is tRNA dimethylallyltransferase.